The following is a 385-amino-acid chain: Lipid-A-disaccharide synthase (385 aa).

Belongs to the LpxB family.

It carries out the reaction a lipid X + a UDP-2-N,3-O-bis[(3R)-3-hydroxyacyl]-alpha-D-glucosamine = a lipid A disaccharide + UDP + H(+). It functions in the pathway bacterial outer membrane biogenesis; LPS lipid A biosynthesis. Condensation of UDP-2,3-diacylglucosamine and 2,3-diacylglucosamine-1-phosphate to form lipid A disaccharide, a precursor of lipid A, a phosphorylated glycolipid that anchors the lipopolysaccharide to the outer membrane of the cell. The sequence is that of Lipid-A-disaccharide synthase from Xylella fastidiosa (strain M23).